Reading from the N-terminus, the 123-residue chain is Small ribosomal subunit protein uS12 (123 aa).

Asp-89 is subject to 3-methylthioaspartic acid.

It belongs to the universal ribosomal protein uS12 family. In terms of assembly, part of the 30S ribosomal subunit. Contacts proteins S8 and S17. May interact with IF1 in the 30S initiation complex.

Its function is as follows. With S4 and S5 plays an important role in translational accuracy. In terms of biological role, interacts with and stabilizes bases of the 16S rRNA that are involved in tRNA selection in the A site and with the mRNA backbone. Located at the interface of the 30S and 50S subunits, it traverses the body of the 30S subunit contacting proteins on the other side and probably holding the rRNA structure together. The combined cluster of proteins S8, S12 and S17 appears to hold together the shoulder and platform of the 30S subunit. This is Small ribosomal subunit protein uS12 from Methylobacterium radiotolerans (strain ATCC 27329 / DSM 1819 / JCM 2831 / NBRC 15690 / NCIMB 10815 / 0-1).